The primary structure comprises 210 residues: Chaperone protein TorD (210 aa).

The protein belongs to the TorD/DmsD family. TorD subfamily.

Its subcellular location is the cytoplasm. In terms of biological role, involved in the biogenesis of TorA. Acts on TorA before the insertion of the molybdenum cofactor and, as a result, probably favors a conformation of the apoenzyme that is competent for acquiring the cofactor. The chain is Chaperone protein TorD from Salmonella dublin (strain CT_02021853).